Here is a 604-residue protein sequence, read N- to C-terminus: MSANSPTGNDPHVFGIPVNATPSNMGSPGSPVNVPPPMNPAVANVNHPVMRTNSNSNANEGTRTLTREQIQQLQQRQRLLLQQRLLEQQRKQQALQNYEAQFYQMLMTLNKRPKRLYNFVEDADSILKKYEQYLHSFEFHIYENNYKICAPANSRLQQQQKQPELTSDGLILTKNNETLKEFLEYVARGRIPDAIMEVLRDCNIQFYEGNLILQVYDHTNTVDVTPKENKPNLNSSSSPSNNNSTQDNSKIQQPSEPNSGVANTGANTANKKASFKRPRVYRTLLKPNDLTTYYDMMSYADNARFSDSIYQQFESEILTLTKRNLSLSVPLNPYEHRDMLEETAFSEPHWDSEKKSFIHEHRAESTREGTKGVVGHIEERDEFPQHSSNYEQLMLIMNERTTTITNSTFAVSLTKNAMEIASSSSNGVRGASSSTSNSASNTRNNSLANGNQVALAAAAAAAAVGSTMGNDNNQFSRLKFIEQWRINKEKRKQQALSANINPTPFNARISMTAPLTPQQQLLQRQQQALEQQQNGGAMKNANKRSGNNATSNNNNNNNNLDKPKVKRPRKNAKKSESGTPAPKKKRMTKKKQSASSTPSSTTMS.

3 disordered regions span residues 1 to 33 (MSANSPTGNDPHVFGIPVNATPSNMGSPGSPVN), 223 to 273 (DVTP…NKKA), and 422 to 446 (SSSSNGVRGASSSTSNSASNTRNNS). Composition is skewed to low complexity over residues 231-249 (PNLNSSSSPSNNNSTQDNS) and 258-272 (NSGVANTGANTANKK). Serine 446 carries the post-translational modification Phosphoserine. Threonine 516 is modified (phosphothreonine). Low complexity-rich tracts occupy residues 519–533 (QQLLQRQQQALEQQQ) and 547–559 (NNATSNNNNNNNN). A disordered region spans residues 519–604 (QQLLQRQQQA…SSTPSSTTMS (86 aa)). Residues 582 to 592 (PKKKRMTKKKQ) are compositionally biased toward basic residues. Residues 593-604 (SASSTPSSTTMS) are compositionally biased toward low complexity.

This sequence belongs to the SPT20 family. Component of the 1.8 MDa SAGA (Spt-Ada-Gcn5 acetyltransferase) complex, which is composed of 19 subunits TRA1, SPT7, TAF5, NGG1/ADA3, SGF73, SPT20/ADA5, SPT8, TAF12, TAF6, HFI1/ADA1, UBP8, GCN5, ADA2, SPT3, SGF29, TAF10, TAF9, SGF11 and SUS1. The SAGA complex is composed of 4 modules, namely the HAT (histone acetyltransferase) module (GCN5, ADA2, NGG1/ADA3 and SGF29), the DUB (deubiquitinating) module (UBP8, SGF11, SGF73 and SUS1), the core or TAF (TBP-associated factor) module (TAF5, TAF6, TAF9, TAF10 and TAF12), and the Tra1 or SPT (Suppressor of Ty) module (TRA1, HFI1/ADA1, SPT3, SPT7, SPT8 and SPT20/ADA5). The Tra1/SPT module binds activators, the core module recruits TBP (TATA-binding protein), the HAT module contains the histone H3 acetyltransferase GCN5, and the DUB module comprises the histone H2B deubiquitinase UBP8. Also identified in an altered form of SAGA, named SALSA (SAGA altered, Spt8 absent) or SLIK (SAGA-like) complex, which contains a C-terminal truncated form of SPT7 and is missing SPT8. However, it has been shown that the SAGA and SAGA-like SALSA/SLIK transcriptional coactivators are structurally and biochemically equivalent. Component of an ADA/GCN5 complex that consists of HFI1/ADA1, ADA2, NGG1/ADA3, SPT20/ADA5 and GCN5 and probably is a subcomplex of SAGA.

The protein localises to the nucleus. Component of the transcription coactivator SAGA complex. SAGA acts as a general cofactor required for essentially all RNA polymerase II transcription. At the promoters, SAGA is required for transcription pre-initiation complex (PIC) recruitment. It influences RNA polymerase II transcriptional activity through different activities such as TBP interaction (via core/TAF module) and promoter selectivity, interaction with transcription activators (via Tra1/SPT module), and chromatin modification through histone acetylation (via HAT module) and deubiquitination (via DUB module). SAGA preferentially acetylates histones H3 (to form H3K9ac, H3K14ac, H3K18ac and H3K23ac) and H2B and deubiquitinates histone H2B. SAGA interacts with DNA via upstream activating sequences (UASs). Also identified in a modified version of SAGA named SALSA or SLIK. The cleavage of SPT7 and the absence of the SPT8 subunit in SLIK neither drive any major conformational differences in its structure compared with SAGA, nor significantly affect HAT, DUB, or DNA-binding activities. Involved in RNA processing, required for the IRE1/RLG1-dependent splicing reaction of HAC1 mRNA. The protein is SAGA complex subunit SPT20 (SPT20) of Saccharomyces cerevisiae (strain ATCC 204508 / S288c) (Baker's yeast).